We begin with the raw amino-acid sequence, 355 residues long: MAEGAVFDAQAVTDAVAEGIAKIENASTMEELKAIKTQYAGAESAMTQASKAIGALPKDQKKDAGKLMGKLRADFGRAFGTKEKQVKAEEEARELAAETVDMTLPVNRKPLGARHPLPKLMEDVEDFFISMGWQISDGPEVETEWYDFDALNFGPDHPARQMQDTFYVKGNQAKDAAGFVGSNMVLRTQTSSDQVRGLITRGVPLYIACPGRVFRTDELDATHTPVFHQVEALAVDKHLTMADLKGVLDKLAVAMFGPEAKTRLRPSYFPFTEPSAELDLWFPDKKGGAGWLEWGGCGMVNPNVLKSAGLDPEVYTGFAFGVGVERTLLLRHDINDMHDLVEGDVRFSEQFVMGE.

Glutamate 273 provides a ligand contact to Mg(2+).

Belongs to the class-II aminoacyl-tRNA synthetase family. Phe-tRNA synthetase alpha subunit type 1 subfamily. In terms of assembly, tetramer of two alpha and two beta subunits. Mg(2+) serves as cofactor.

It is found in the cytoplasm. It carries out the reaction tRNA(Phe) + L-phenylalanine + ATP = L-phenylalanyl-tRNA(Phe) + AMP + diphosphate + H(+). The polypeptide is Phenylalanine--tRNA ligase alpha subunit (Bifidobacterium adolescentis (strain ATCC 15703 / DSM 20083 / NCTC 11814 / E194a)).